Here is a 424-residue protein sequence, read N- to C-terminus: Double-stranded RNA-binding protein 8 (424 aa).

Pro residues predominate over residues 1–10; that stretch reads MDMPPTPLPP. Residues 1–22 are disordered; it reads MDMPPTPLPPETANTSPAPNGA. 2 consecutive DRBM domains span residues 33 to 102 and 118 to 185; these read VFKS…EIVK and LCKN…AIQG. 2 stretches are compositionally biased toward basic and acidic residues: residues 287-308 and 318-328; these read KRVE…ENQH and DEARVEQEPSR. The segment at 287–330 is disordered; that stretch reads KRVEAEPPRDIEMVQPDKENQHSDAALVQPDDEARVEQEPSRDI.

Its function is as follows. Binds double-stranded RNA. The chain is Double-stranded RNA-binding protein 8 (DRB8) from Oryza sativa subsp. japonica (Rice).